A 131-amino-acid chain; its full sequence is Profilin-5 (131 aa).

The cysteines at positions 13 and 115 are disulfide-linked. Residues 81–97 (AVIRGKKGAGGITIKKT) carry the Involved in PIP2 interaction motif. Threonine 111 bears the Phosphothreonine mark.

The protein belongs to the profilin family. Occurs in many kinds of cells as a complex with monomeric actin in a 1:1 ratio. Phosphorylated by MAP kinases.

The protein localises to the cytoplasm. It is found in the cytoskeleton. Its function is as follows. Binds to actin and affects the structure of the cytoskeleton. At high concentrations, profilin prevents the polymerization of actin, whereas it enhances it at low concentrations. In Phleum pratense (Common timothy), this protein is Profilin-5.